The primary structure comprises 333 residues: Glyceraldehyde-3-phosphate dehydrogenase (333 aa).

NAD(+) is bound by residues 11-12, Asp32, and Arg77; that span reads RI. D-glyceraldehyde 3-phosphate is bound by residues 148–150, Thr179, 208–209, and Arg231; these read SCT and TG. The active-site Nucleophile is Cys149. Asn313 is a binding site for NAD(+).

This sequence belongs to the glyceraldehyde-3-phosphate dehydrogenase family. Homotetramer.

It localises to the cytoplasm. It catalyses the reaction D-glyceraldehyde 3-phosphate + phosphate + NAD(+) = (2R)-3-phospho-glyceroyl phosphate + NADH + H(+). Its pathway is carbohydrate degradation; glycolysis; pyruvate from D-glyceraldehyde 3-phosphate: step 1/5. This Glossina morsitans morsitans (Savannah tsetse fly) protein is Glyceraldehyde-3-phosphate dehydrogenase (Gapdh).